Reading from the N-terminus, the 458-residue chain is MTVTIVGSQLGDEGKGGIVDLYGDDVDVVARYQGGDNAGHTVVHEGEEYKLSLVPSGAIRGKVGVLGNGCVVNPRTLFDEIDTLQERGLDPDVRIAERAHVILPFHRVLDGIEEELKSETDDEVGTTGRGIGPTYEDKAGRRGVRVGDLLDPDVLRERLEYVVPQKRAVVEDVYDLDVDELDDPDAFDVDAIFEEFREFGRRFEAEDMTVNAGAFLSATIDEGQNVMLEGAQGTIIDIDHGNYPYVTSSNPTAGGAATGTGLSPGVVGDGEVIGIVKAYLTRVGSGPLPTELGGVVGDTPGYDEQGEGENEELANYIREEGGEYGTVTGRPRRVGWLDLPMLRHSTRVSGFTGIAINHLDVLAGLDEVKVGHTYTLDGEELASMPATTEQWAKCEANFRSFDGWPEVDWADAAEEGYDALPENAKAYVEYIESELDTPAYAIGVGPGRGETIVREQPF.

GTP contacts are provided by residues 11 to 17 (GDEGKGG) and 39 to 41 (GHT). Asp-12 functions as the Proton acceptor in the catalytic mechanism. Mg(2+) is bound by residues Asp-12 and Gly-39. Residues 12-15 (DEGK), 37-40 (NAGH), Thr-127, Arg-141, Gln-232, Thr-247, and Arg-330 each bind IMP. His-40 (proton donor) is an active-site residue. 326-332 (TVTGRPR) lines the substrate pocket. Residues Arg-332, 358-360 (HLD), and 443-445 (GVG) contribute to the GTP site.

Belongs to the adenylosuccinate synthetase family. As to quaternary structure, homodimer. It depends on Mg(2+) as a cofactor.

The protein localises to the cytoplasm. The catalysed reaction is IMP + L-aspartate + GTP = N(6)-(1,2-dicarboxyethyl)-AMP + GDP + phosphate + 2 H(+). The protein operates within purine metabolism; AMP biosynthesis via de novo pathway; AMP from IMP: step 1/2. In terms of biological role, plays an important role in the de novo pathway of purine nucleotide biosynthesis. Catalyzes the first committed step in the biosynthesis of AMP from IMP. The polypeptide is Adenylosuccinate synthetase (Haloarcula marismortui (strain ATCC 43049 / DSM 3752 / JCM 8966 / VKM B-1809) (Halobacterium marismortui)).